Here is a 216-residue protein sequence, read N- to C-terminus: Ras-like protein (216 aa).

G16–S23 serves as a coordination point for GTP. The Effector region motif lies at Y38–Y46. GTP contacts are provided by residues D63–Q67 and N122–D125. 2 S-palmitoyl cysteine lipidation sites follow: C209 and C210. C213 bears the Cysteine methyl ester mark. C213 carries S-geranylgeranyl cysteine lipidation. Positions V214–L216 are cleaved as a propeptide — removed in mature form.

This sequence belongs to the small GTPase superfamily. Ras family.

Its subcellular location is the cell membrane. It catalyses the reaction GTP + H2O = GDP + phosphate + H(+). Its activity is regulated as follows. Alternates between an inactive form bound to GDP and an active form bound to GTP. Activated by a guanine nucleotide-exchange factor (GEF) and inactivated by a GTPase-activating protein (GAP). This is Ras-like protein (RAS1) from Cryptococcus neoformans var. neoformans serotype D (strain B-3501A) (Filobasidiella neoformans).